Consider the following 385-residue polypeptide: MSSLFQTYGRWDIDIKKAKGTYVEDQNGKTYLDFIQGIAVSNLGHCHEAVTEAVKKQLDSVWHVSNLFQNSLQEQAAQKLAAHSAGDLVFFCNSGAEANEGAIKLARKATGKTKIITFLQSFHGRTYAGMAATGQDKIKTGFGPMLGGFHYLPYNDPSAFKALGEEGDIAAVMLETVQGEGGVNPASAEFLSAVQSFCKEKQALLIIDEIQTGIGRTGKGFAYEHFGLSPDIITVAKGLGNGFPVGAVIGKKQLGEAFTPGSHGTTFGGNMLAMAAVNATLQIVFQPDFLQEAADKGAFLKEQLEAELKSPFVKQIRGKGLMLGIECDGPVADIIAELQTLGLLVLPAGPNVIRLLPPLTVTKDEIAEAVSKLKQAIAHHSAVNQ.

Residues 95 to 96 (GA) and F122 contribute to the pyridoxal 5'-phosphate site. A N(2)-acetyl-L-ornithine-binding site is contributed by R125. A pyridoxal 5'-phosphate-binding site is contributed by 208 to 211 (DEIQ). Residue K237 is modified to N6-(pyridoxal phosphate)lysine. Residue T265 participates in N(2)-acetyl-L-ornithine binding. Residue T266 coordinates pyridoxal 5'-phosphate.

This sequence belongs to the class-III pyridoxal-phosphate-dependent aminotransferase family. ArgD subfamily. Homodimer. Pyridoxal 5'-phosphate is required as a cofactor.

The protein resides in the cytoplasm. The enzyme catalyses N(2)-acetyl-L-ornithine + 2-oxoglutarate = N-acetyl-L-glutamate 5-semialdehyde + L-glutamate. The protein operates within amino-acid biosynthesis; L-arginine biosynthesis; N(2)-acetyl-L-ornithine from L-glutamate: step 4/4. This Bacillus subtilis (strain 168) protein is Acetylornithine aminotransferase.